The following is a 714-amino-acid chain: Fatty acid oxidation complex subunit alpha (714 aa).

Positions 1 to 190 are enoyl-CoA hydratase; the sequence is MEMTSAFTLN…KLGLVDDVVP (190 aa). Residues 306–714 form a 3-hydroxyacyl-CoA dehydrogenase region; the sequence is APLNSVGILG…FWKTTATDLQ (409 aa).

The protein in the N-terminal section; belongs to the enoyl-CoA hydratase/isomerase family. In the central section; belongs to the 3-hydroxyacyl-CoA dehydrogenase family. In terms of assembly, heterotetramer of two alpha chains (FadJ) and two beta chains (FadI).

Its subcellular location is the cytoplasm. The enzyme catalyses a (3S)-3-hydroxyacyl-CoA = a (2E)-enoyl-CoA + H2O. The catalysed reaction is a 4-saturated-(3S)-3-hydroxyacyl-CoA = a (3E)-enoyl-CoA + H2O. It catalyses the reaction a (3S)-3-hydroxyacyl-CoA + NAD(+) = a 3-oxoacyl-CoA + NADH + H(+). It carries out the reaction (3S)-3-hydroxybutanoyl-CoA = (3R)-3-hydroxybutanoyl-CoA. It participates in lipid metabolism; fatty acid beta-oxidation. Functionally, catalyzes the formation of a hydroxyacyl-CoA by addition of water on enoyl-CoA. Also exhibits 3-hydroxyacyl-CoA epimerase and 3-hydroxyacyl-CoA dehydrogenase activities. Strongly involved in the anaerobic degradation of long and medium-chain fatty acids in the presence of nitrate and weakly involved in the aerobic degradation of long-chain fatty acids. The chain is Fatty acid oxidation complex subunit alpha (fadJ) from Escherichia coli (strain K12).